Here is a 556-residue protein sequence, read N- to C-terminus: Phospholipase D (556 aa).

Residues 1-47 (MTSDQRPARLPTHKGKLLAPHRLHRLIPVSVALTTVCAALPSSTAYA) form the signal peptide. One can recognise a PLD phosphodiesterase 1 domain in the interval 210-237 (SLSWNHSKLLVVDGKTAITGGINGWKDD). The disordered stretch occupies residues 326-360 (SDPSSGYHPDLPTAPDTKCTVGLHDNTNADRDYDT). The region spanning 484-511 (KPYALHHKLVSVDDSAFYIGSKNLYPAW) is the PLD phosphodiesterase 2 domain.

This sequence belongs to the phospholipase D family. Probably has at least 1 disulfide bond.

The protein resides in the secreted. It carries out the reaction a 1,2-diacyl-sn-glycero-3-phosphocholine + H2O = a 1,2-diacyl-sn-glycero-3-phosphate + choline + H(+). With respect to regulation, inhibited by mercaptoethanol and dithiothreitol. A reversible phospholipase active on phosphatidylcholine (PC) and phosphatidylethanolamine. Lysophosphatidylcholine and egg sphingomyelin are hydrolyzed about 50 times and 100 times more slowly than PC, respectively. During the transphosphatidylation reaction straight-chain hydroxy compounds, such as triethyleneglycol and triethyleneglycol monomethyl ether, were phosphatidylated in good yield, as were monosaccharides. Disaccharides and sugar alcohol reacted slowly, while N-acetyl-D-galactosamine, D-galactosamine and D-galacturonic acid were not phosphatidylated. This chain is Phospholipase D, found in Streptomyces antibioticus.